Consider the following 180-residue polypeptide: Ribosome maturation factor RimM (180 aa).

Positions 103-176 constitute a PRC barrel domain; it reads GDIWWDRDLV…RIVVDPPPGL (74 aa).

The protein belongs to the RimM family. In terms of assembly, binds ribosomal protein uS19.

It localises to the cytoplasm. An accessory protein needed during the final step in the assembly of 30S ribosomal subunit, possibly for assembly of the head region. Essential for efficient processing of 16S rRNA. May be needed both before and after RbfA during the maturation of 16S rRNA. It has affinity for free ribosomal 30S subunits but not for 70S ribosomes. The sequence is that of Ribosome maturation factor RimM from Frankia alni (strain DSM 45986 / CECT 9034 / ACN14a).